A 102-amino-acid chain; its full sequence is NADH-quinone oxidoreductase subunit K (102 aa).

The next 3 membrane-spanning stretches (helical) occupy residues 5-25 (IAHY…GIFL), 31-51 (IVIL…FVAF), and 66-86 (FVLT…VVFF).

The protein belongs to the complex I subunit 4L family. In terms of assembly, NDH-1 is composed of 14 different subunits. Subunits NuoA, H, J, K, L, M, N constitute the membrane sector of the complex.

Its subcellular location is the cell inner membrane. The enzyme catalyses a quinone + NADH + 5 H(+)(in) = a quinol + NAD(+) + 4 H(+)(out). Its function is as follows. NDH-1 shuttles electrons from NADH, via FMN and iron-sulfur (Fe-S) centers, to quinones in the respiratory chain. The immediate electron acceptor for the enzyme in this species is believed to be ubiquinone. Couples the redox reaction to proton translocation (for every two electrons transferred, four hydrogen ions are translocated across the cytoplasmic membrane), and thus conserves the redox energy in a proton gradient. The sequence is that of NADH-quinone oxidoreductase subunit K from Brucella abortus (strain S19).